Here is a 453-residue protein sequence, read N- to C-terminus: Serine/threonine-protein kinase VRK3 (453 aa).

A disordered region spans residues 30 to 123 (EDGGTQSAVT…QSPQTLKRTR (94 aa)). A compositionally biased stretch (polar residues) spans 33 to 46 (GTQSAVTPHVSSVP). The short motif at 49-64 (RRDLNSSFETSPKKVK) is the Nuclear localization signal element. A phosphoserine mark is found at Ser54, Ser55, Ser59, Ser82, Ser83, and Ser108. Residues 81–101 (DSSGSDNTLTSPDRATGTRSR) are compositionally biased toward polar residues. Residues 109 to 123 (PLSNRQSPQTLKRTR) are compositionally biased toward polar residues. Residues 125–436 (TTSLQALATG…TLRNSLEALL (312 aa)) enclose the Protein kinase domain.

The protein belongs to the protein kinase superfamily. CK1 Ser/Thr protein kinase family. VRK subfamily. As to quaternary structure, interacts with DUSP3. Interacts with RAN. Interacts with HSP70/HSPA1A. Post-translationally, phosphorylated at Ser-108 by CDK5; leading to protection of the cell against H2O2-induced apoptosis. Ubiquitinated by RNF144A. Expressed in liver, kidney, muscle, thymus, and bone marrow. Weakly expressed in spleen.

It localises to the nucleus. The protein localises to the cytoplasm. The enzyme catalyses L-seryl-[protein] + ATP = O-phospho-L-seryl-[protein] + ADP + H(+). Its function is as follows. Plays a role in the regulation of the cell cycle by phosphorylating the nuclear envelope protein barrier-to-autointegration factor/BAF that is required for disassembly and reassembly, respectively, of the nuclear envelope during mitosis. Under normal physiological conditions, negatively regulates ERK activity along with VHR phosphatase in the nucleus, causing timely and transient action of ERK. Stress conditions activate CDK5 which phosphorylates VRK3 to increase VHR phosphatase activity and suppress prolonged ERK activation that causes cell death. For example, upon glutamate induction, promotes nuclear localization of HSP70/HSPA1A to inhibit ERK activation via VHR phosphatase. The polypeptide is Serine/threonine-protein kinase VRK3 (Vrk3) (Mus musculus (Mouse)).